The primary structure comprises 112 residues: Thyroid transcription factor 1 (112 aa).

Residues 1 to 60 (RRNRRVLFSQAQVYELERRFKQQKYLSAPEREHLASMIHLTPTQVKIWFQNHRYKMKRQA) constitute a DNA-binding region (homeobox). Residues 59 to 100 (QAKDKAAQQQLQQDSGGGGGGGGAGCPQQQQAQQQSPRRVAV) form a disordered region. A compositionally biased stretch (gly residues) spans 73–83 (SGGGGGGGGAG). Residues 84–93 (CPQQQQAQQQ) show a composition bias toward low complexity.

This sequence belongs to the NK-2 homeobox family. Phosphorylated on serine residues.

It localises to the nucleus. Functionally, transcription factor that binds and activates the promoter of thyroid specific genes such as thyroglobulin, thyroperoxidase, and thyrotropin receptor. Crucial in the maintenance of the thyroid differentiation phenotype. May play a role in lung development and surfactant homeostasis. The sequence is that of Thyroid transcription factor 1 (TITF1) from Cavia porcellus (Guinea pig).